The following is a 239-amino-acid chain: Zwei Ig domain protein zig-7 (239 aa).

A signal peptide spans 1–21 (MKLINCISIALLCTLVDFSSA). Asparagine 43 carries an N-linked (GlcNAc...) asparagine glycan. The Ig-like C2-type domain maps to 145-211 (PHVIGAERRG…TEDHIGKYRC (67 aa)). A disulfide bond links cysteine 164 and cysteine 211.

Expressed in body wall muscles.

It localises to the secreted. Functionally, probably not involved in maintaining the position of ASI and ASH head neuron cell bodies and ventral nerve cord axons of PVQ, PVP, RMEV, AVK and HSN neurons. In Caenorhabditis elegans, this protein is Zwei Ig domain protein zig-7.